The following is a 206-amino-acid chain: 3-isopropylmalate dehydratase small subunit (206 aa).

Belongs to the LeuD family. LeuD type 1 subfamily. As to quaternary structure, heterodimer of LeuC and LeuD.

It carries out the reaction (2R,3S)-3-isopropylmalate = (2S)-2-isopropylmalate. It functions in the pathway amino-acid biosynthesis; L-leucine biosynthesis; L-leucine from 3-methyl-2-oxobutanoate: step 2/4. Functionally, catalyzes the isomerization between 2-isopropylmalate and 3-isopropylmalate, via the formation of 2-isopropylmaleate. The sequence is that of 3-isopropylmalate dehydratase small subunit from Leptospira borgpetersenii serovar Hardjo-bovis (strain JB197).